Here is an 87-residue protein sequence, read N- to C-terminus: MAIKMRLQRFGVHKRPFYRVVASESKNARDGKFLEILGTYDTILDIVELDHNKVQKWLSNGAQPTKTVKKVFKKSKFVAKTNTKVEK.

This sequence belongs to the bacterial ribosomal protein bS16 family.

In Onion yellows phytoplasma (strain OY-M), this protein is Small ribosomal subunit protein bS16.